The chain runs to 130 residues: Small ribosomal subunit protein eS6 (130 aa).

The interval 78–98 (SGPPGFRPERKGERRRKTVRG) is disordered.

It belongs to the eukaryotic ribosomal protein eS6 family.

This chain is Small ribosomal subunit protein eS6, found in Methanopyrus kandleri (strain AV19 / DSM 6324 / JCM 9639 / NBRC 100938).